The chain runs to 286 residues: Undecaprenyl-diphosphatase (286 aa).

The next 7 membrane-spanning stretches (helical) occupy residues 5–25 (WFII…FLPV), 55–75 (IDAF…VLYW), 92–112 (SGFK…VLGL), 122–142 (LFNP…MIFA), 185–205 (IIGA…SFFL), 229–249 (MHIV…LIVV), and 264–284 (FAMY…FNVI).

It belongs to the UppP family.

It is found in the cell membrane. It catalyses the reaction di-trans,octa-cis-undecaprenyl diphosphate + H2O = di-trans,octa-cis-undecaprenyl phosphate + phosphate + H(+). In terms of biological role, catalyzes the dephosphorylation of undecaprenyl diphosphate (UPP). Confers resistance to bacitracin. This is Undecaprenyl-diphosphatase from Clostridium novyi (strain NT).